Here is a 397-residue protein sequence, read N- to C-terminus: S-adenosylmethionine synthase (397 aa).

Histidine 15 lines the ATP pocket. Aspartate 17 contributes to the Mg(2+) binding site. Glutamate 43 is a binding site for K(+). 2 residues coordinate L-methionine: glutamate 56 and glutamine 99. Residues 99–109 (QSGDIAMGVDE) are flexible loop. Residues 175–177 (DGK), 241–242 (RF), aspartate 250, 256–257 (RK), alanine 273, and lysine 277 contribute to the ATP site. Position 250 (aspartate 250) interacts with L-methionine. Lysine 281 serves as a coordination point for L-methionine.

It belongs to the AdoMet synthase family. In terms of assembly, homotetramer; dimer of dimers. Requires Mg(2+) as cofactor. K(+) serves as cofactor.

The protein localises to the cytoplasm. It carries out the reaction L-methionine + ATP + H2O = S-adenosyl-L-methionine + phosphate + diphosphate. It participates in amino-acid biosynthesis; S-adenosyl-L-methionine biosynthesis; S-adenosyl-L-methionine from L-methionine: step 1/1. Its function is as follows. Catalyzes the formation of S-adenosylmethionine (AdoMet) from methionine and ATP. The overall synthetic reaction is composed of two sequential steps, AdoMet formation and the subsequent tripolyphosphate hydrolysis which occurs prior to release of AdoMet from the enzyme. This chain is S-adenosylmethionine synthase, found in Clostridioides difficile (strain 630) (Peptoclostridium difficile).